The chain runs to 467 residues: MVTVRREKDSMGVIEVPADKLWGAQTQRSLEHFRISTEKMPVSLIHALALTKRAAAKVNQDLGLLAAEKASAIIEAADEVLAGKHADEFPLAIWQTGSGTQSNMNMNEVLANRASEILGGVRGMERKVHPNDDVNKSQSSNDVFPTAMHVAALLALREHLIPQLSALTDTLRDKSHAFADIVKIGRTHLQDATPLTLGQEISGWVAMLEHNLRHIEHSLPHVAELALGGTAVGTGLNTHPEYARRVAEELATITAAPFVTAPNKFEALATCDALVQAHGALKGLAASLMKIANDVRWLASGPRCGIGEIAIPENEPGSSIMPGKVNPTQCEAVTMLCCQVMGNDVAINMGGASGNFELNVYRPMVIHNFLQTVRLLADGMASFNQHCASGIEPNRERITQLLNESLMLVTALNTHIGYDKAAEIAKKAHKEGLTLKASAVALGYLSDAEFDAWVRPELMVGSMTPGR.

Substrate contacts are provided by residues 98-100, R126, 129-132, 139-141, and T187; these read SGT, HPND, and SSN. H188 (proton donor/acceptor) is an active-site residue. S318 is a catalytic residue. Substrate is bound by residues S319 and 324-326; that span reads KVN.

This sequence belongs to the class-II fumarase/aspartase family. Fumarase subfamily. In terms of assembly, homotetramer.

The protein resides in the cytoplasm. It carries out the reaction (S)-malate = fumarate + H2O. The protein operates within carbohydrate metabolism; tricarboxylic acid cycle; (S)-malate from fumarate: step 1/1. Its function is as follows. Involved in the TCA cycle. Catalyzes the stereospecific interconversion of fumarate to L-malate. The protein is Fumarate hydratase class II of Salmonella typhi.